Here is a 336-residue protein sequence, read N- to C-terminus: Glycerol-3-phosphate dehydrogenase [NAD(P)+] (336 aa).

NADPH is bound by residues W11, R33, and K105. Sn-glycerol 3-phosphate is bound by residues K105, G141, and S143. A145 provides a ligand contact to NADPH. 5 residues coordinate sn-glycerol 3-phosphate: K196, D249, S259, R260, and N261. K196 acts as the Proton acceptor in catalysis. R260 lines the NADPH pocket. Residues V284 and E286 each contribute to the NADPH site.

The protein belongs to the NAD-dependent glycerol-3-phosphate dehydrogenase family.

The protein resides in the cytoplasm. It carries out the reaction sn-glycerol 3-phosphate + NAD(+) = dihydroxyacetone phosphate + NADH + H(+). The catalysed reaction is sn-glycerol 3-phosphate + NADP(+) = dihydroxyacetone phosphate + NADPH + H(+). It participates in membrane lipid metabolism; glycerophospholipid metabolism. Its function is as follows. Catalyzes the reduction of the glycolytic intermediate dihydroxyacetone phosphate (DHAP) to sn-glycerol 3-phosphate (G3P), the key precursor for phospholipid synthesis. The sequence is that of Glycerol-3-phosphate dehydrogenase [NAD(P)+] from Delftia acidovorans (strain DSM 14801 / SPH-1).